Here is a 753-residue protein sequence, read N- to C-terminus: Photosystem I P700 chlorophyll a apoprotein A1 (753 aa).

8 consecutive transmembrane segments (helical) span residues 72 to 95 (IFSA…FHGA), 158 to 181 (LYCT…FHYH), 197 to 221 (MNHH…HVSL), 293 to 311 (TAHH…GHMY), 350 to 373 (WHAQ…HHMY), 389 to 415 (LSLF…IFMV), 437 to 459 (AIIS…LYVH), and 534 to 552 (FMVH…LILL). [4Fe-4S] cluster-binding residues include Cys576 and Cys585. Transmembrane regions (helical) follow at residues 592 to 613 (HVFL…HFSW) and 667 to 689 (LSAY…MFLF). His678 lines the chlorophyll a' pocket. Chlorophyll a-binding residues include Met686 and Tyr694. Trp695 provides a ligand contact to phylloquinone. The helical transmembrane segment at 727–747 (AVGVAHYLLGGIVTTWAFFLA) threads the bilayer.

The protein belongs to the PsaA/PsaB family. In terms of assembly, the PsaA/B heterodimer binds the P700 chlorophyll special pair and subsequent electron acceptors. PSI consists of a core antenna complex that captures photons, and an electron transfer chain that converts photonic excitation into a charge separation. The cyanobacterial PSI reaction center is composed of one copy each of PsaA,B,C,D,E,F,I,J,K,L,M and X, and forms trimeric complexes. PSI electron transfer chain: 5 chlorophyll a, 1 chlorophyll a', 2 phylloquinones and 3 4Fe-4S clusters. PSI core antenna: 90 chlorophyll a, 22 carotenoids, 3 phospholipids and 1 galactolipid. P700 is a chlorophyll a/chlorophyll a' dimer, A0 is one or more chlorophyll a, A1 is one or both phylloquinones and FX is a shared 4Fe-4S iron-sulfur center. serves as cofactor.

It is found in the cellular thylakoid membrane. It catalyses the reaction reduced [plastocyanin] + hnu + oxidized [2Fe-2S]-[ferredoxin] = oxidized [plastocyanin] + reduced [2Fe-2S]-[ferredoxin]. Functionally, psaA and PsaB bind P700, the primary electron donor of photosystem I (PSI), as well as the electron acceptors A0, A1 and FX. PSI is a plastocyanin/cytochrome c6-ferredoxin oxidoreductase, converting photonic excitation into a charge separation, which transfers an electron from the donor P700 chlorophyll pair to the spectroscopically characterized acceptors A0, A1, FX, FA and FB in turn. Oxidized P700 is reduced on the lumenal side of the thylakoid membrane by plastocyanin or cytochrome c6. This is Photosystem I P700 chlorophyll a apoprotein A1 from Trichodesmium erythraeum (strain IMS101).